We begin with the raw amino-acid sequence, 191 residues long: DNA-directed RNA polymerase subunit Rpo3 (191 aa).

It belongs to the archaeal Rpo3/eukaryotic RPB3 RNA polymerase subunit family. As to quaternary structure, part of the RNA polymerase complex. Interacts with Rpo12. Forms an Rpo3-Rpo10-Rpo11-Rpo12 complex upon coexpression.

It is found in the cytoplasm. The enzyme catalyses RNA(n) + a ribonucleoside 5'-triphosphate = RNA(n+1) + diphosphate. In terms of biological role, DNA-dependent RNA polymerase (RNAP) catalyzes the transcription of DNA into RNA using the four ribonucleoside triphosphates as substrates. In Methanocaldococcus jannaschii (strain ATCC 43067 / DSM 2661 / JAL-1 / JCM 10045 / NBRC 100440) (Methanococcus jannaschii), this protein is DNA-directed RNA polymerase subunit Rpo3.